Reading from the N-terminus, the 262-residue chain is Zinc import ATP-binding protein ZnuC (262 aa).

The 216-residue stretch at 5 to 220 (VSLEQLCVEF…PSYIALFGNA (216 aa)) folds into the ABC transporter domain. 37–44 (GPNGAGKS) provides a ligand contact to ATP. The tract at residues 236–262 (HHDLSGSPVSGDATSCSNHNHGHHHHD) is disordered.

It belongs to the ABC transporter superfamily. Zinc importer (TC 3.A.1.15.5) family. As to quaternary structure, the complex is composed of two ATP-binding proteins (ZnuC), two transmembrane proteins (ZnuB) and a solute-binding protein (ZnuA).

The protein localises to the cell inner membrane. It catalyses the reaction Zn(2+)(out) + ATP(in) + H2O(in) = Zn(2+)(in) + ADP(in) + phosphate(in) + H(+)(in). Part of the ABC transporter complex ZnuABC involved in zinc import. Responsible for energy coupling to the transport system. The protein is Zinc import ATP-binding protein ZnuC of Vibrio parahaemolyticus serotype O3:K6 (strain RIMD 2210633).